A 331-amino-acid polypeptide reads, in one-letter code: Glucokinase (331 aa).

An ATP-binding site is contributed by 16–21; that stretch reads GDIGGT.

Belongs to the bacterial glucokinase family.

It localises to the cytoplasm. It carries out the reaction D-glucose + ATP = D-glucose 6-phosphate + ADP + H(+). In Pseudomonas aeruginosa (strain LESB58), this protein is Glucokinase.